Reading from the N-terminus, the 341-residue chain is Guanine nucleotide-binding protein subunit beta (341 aa).

WD repeat units follow at residues 54–84 (GHLA…IVWD), 96–126 (LRSS…SIYS), 142–171 (GHTG…ALWN), 183–213 (GHTG…KLFD), 225–255 (GHES…RLFD), 269–299 (NIIC…NVWD), and 311–341 (GHDN…KIWN).

It belongs to the WD repeat G protein beta family. As to quaternary structure, g proteins are composed of 3 units, alpha, beta and gamma.

In terms of biological role, guanine nucleotide-binding proteins (G proteins) are involved as a modulator or transducer in various transmembrane signaling systems. The beta and gamma chains are required for the GTPase activity, for replacement of GDP by GTP, and for G protein-effector interaction. This chain is Guanine nucleotide-binding protein subunit beta, found in Loligo forbesii (Veined squid).